We begin with the raw amino-acid sequence, 161 residues long: 3-isopropylmalate dehydratase small subunit 1 (161 aa).

This sequence belongs to the LeuD family. LeuD type 2 subfamily. Heterodimer of LeuC and LeuD.

It carries out the reaction (2R,3S)-3-isopropylmalate = (2S)-2-isopropylmalate. Its pathway is amino-acid biosynthesis; L-leucine biosynthesis; L-leucine from 3-methyl-2-oxobutanoate: step 2/4. Functionally, catalyzes the isomerization between 2-isopropylmalate and 3-isopropylmalate, via the formation of 2-isopropylmaleate. The chain is 3-isopropylmalate dehydratase small subunit 1 (leuD1) from Archaeoglobus fulgidus (strain ATCC 49558 / DSM 4304 / JCM 9628 / NBRC 100126 / VC-16).